Reading from the N-terminus, the 214-residue chain is Calcineurin B homologous protein 3 (214 aa).

Gly-2 carries the N-myristoyl glycine lipid modification. The 36-residue stretch at 110 to 145 (CRKDKLRFLFNMYDTDNDSKITLEEYRKVVEELLSG) folds into the EF-hand domain. Positions 123, 125, 127, 129, and 134 each coordinate Ca(2+).

It belongs to the calcineurin regulatory subunit family. CHP subfamily. As to quaternary structure, monomer. Homodimer.

It is found in the nucleus. Its subcellular location is the cytoplasm. It localises to the membrane. The protein localises to the cell membrane. The protein resides in the cell projection. It is found in the lamellipodium. Its subcellular location is the ruffle membrane. Functionally, functions as an integral cofactor in cell pH regulation by controlling plasma membrane-type Na(+)/H(+) exchange activity. Promotes the induction of hematopoietic stem cell differentiation toward megakaryocytic lineage. Essential for the coupling of ERK cascade activation with the expression of ETS family genes in megakaryocytic differentiation. Also involved in granulocytic differentiation in a ERK-dependent manner. Inhibits the phosphatase activity of calcineurin. In Xenopus tropicalis (Western clawed frog), this protein is Calcineurin B homologous protein 3 (tesc).